The chain runs to 237 residues: Aliphatic sulfonates import ATP-binding protein SsuB 1 (237 aa).

One can recognise an ABC transporter domain in the interval 5-221 (LMDIRVEHKA…PRDRRDPLLA (217 aa)). Residue 38 to 45 (GPSGCGKS) participates in ATP binding.

The protein belongs to the ABC transporter superfamily. Aliphatic sulfonates importer (TC 3.A.1.17.2) family. As to quaternary structure, the complex is composed of two ATP-binding proteins (SsuB), two transmembrane proteins (SsuC) and a solute-binding protein (SsuA).

Its subcellular location is the cell inner membrane. It catalyses the reaction ATP + H2O + aliphatic sulfonate-[sulfonate-binding protein]Side 1 = ADP + phosphate + aliphatic sulfonateSide 2 + [sulfonate-binding protein]Side 1.. In terms of biological role, part of the ABC transporter complex SsuABC involved in aliphatic sulfonates import. Responsible for energy coupling to the transport system. In Pseudomonas syringae pv. syringae (strain B728a), this protein is Aliphatic sulfonates import ATP-binding protein SsuB 1.